The sequence spans 731 residues: SUN domain-containing protein 2 (731 aa).

Disordered regions lie at residues 1-69 (MSRR…SHTS) and 106-142 (SGDL…FGSS). The segment at 1–128 (MSRRSQRLTR…GSESSKANGL (128 aa)) is LMNA-binding. At 1-226 (MSRRSQRLTR…SRHFSLNLKS (226 aa)) the chain is on the nuclear side. Residue Ser-12 is modified to Phosphoserine. The span at 18–33 (GGSSSSGASSVAGSQG) shows a compositional bias: low complexity. 2 positions are modified to phosphoserine: Ser-39 and Ser-55. Position 117 is a phosphothreonine (Thr-117). Phosphoserine occurs at positions 120, 123, and 147. The chain crosses the membrane as a helical span at residues 227–247 (FLWFLLLLLLLTGLTYGAWHF). Residues 248–731 (YPLGLQTLQP…RFRVHGEPAH (484 aa)) lie on the Perinuclear space side of the membrane. Coiled coils occupy residues 396–452 (QESE…VADE) and 486–519 (RSGL…KSAR). The segment at 521–731 (AAASLGQILQ…RFRVHGEPAH (211 aa)) is sufficient for interaction with SYNE1 and SYNE2. In terms of domain architecture, SUN spans 569-730 (GASVISTRCS…YRFRVHGEPA (162 aa)). Asn-650 carries N-linked (GlcNAc...) asparagine glycosylation.

As to quaternary structure, core component of the LINC complex which is composed of inner nuclear membrane SUN domain-containing proteins coupled to outer nuclear membrane KASH domain-containing nesprins. SUN and KASH domain-containing proteins seem to bind each other promiscuously; however, differentially expression of LINC complex constituents is giving rise to specific assemblies. At least SUN1/2-containing core LINC complexes are proposed to be hexameric composed of three protomers of each KASH and SUN domain-containing protein. Interacts with SYNE2; the SUN2:SYNE2/KASH2 LINC complex is a heterohexamer; the homotrimeric cloverleave-like conformation of the SUN domain is a prerequisite for LINC complex formation in which three separate SYNE2/KASH2 peptides bind at the interface of adjacent SUN domains. Component of a probable SUN2:KASH5 LINC complex. Interacts with SYNE1 and SYNE3; probably forming respective LINC complexes. Interacts with A-type lamin. Interaction with lamins B1 and C is hardly detectable. Interacts with EMD. Interacts with RAB5A. Interacts with TMEM43 and TMEM201. Interacts with IRAG2. In terms of processing, the disulfide bond with SYNE2 is required for stability of the SUN2:SYNE2/KASH2 LINC complex under tensile forces though not required for the interaction. The disulfide bond is proposed to be conserved in LINC complexes involved in force transmission. As to expression, highly expressed in heart, placenta and muscle.

The protein resides in the nucleus inner membrane. Its subcellular location is the nucleus envelope. The protein localises to the endosome membrane. Its function is as follows. As a component of the LINC (LInker of Nucleoskeleton and Cytoskeleton) complex, involved in the connection between the nuclear lamina and the cytoskeleton. The nucleocytoplasmic interactions established by the LINC complex play an important role in the transmission of mechanical forces across the nuclear envelope and in nuclear movement and positioning. Specifically, SYNE2 and SUN2 assemble in arrays of transmembrane actin-associated nuclear (TAN) lines which are bound to F-actin cables and couple the nucleus to retrograde actin flow during actin-dependent nuclear movement. Required for interkinetic nuclear migration (INM) and essential for nucleokinesis and centrosome-nucleus coupling during radial neuronal migration in the cerebral cortex and during glial migration. Required for nuclear migration in retinal photoreceptor progenitors implicating association with cytoplasmic dynein-dynactin and kinesin motor complexes, and probably B-type lamins; SUN1 and SUN2 seem to act redundantly. The SUN1/2:KASH5 LINC complex couples telomeres to microtubules during meiosis; SUN1 and SUN2 seem to act at least partial redundantly. Anchors chromosome movement in the prophase of meiosis and is involved in selective gene expression of coding and non-coding RNAs needed for gametogenesis. Required for telomere attachment to nuclear envelope and gametogenesis. May also function on endocytic vesicles as a receptor for Rab5-GDP and participate in the activation of Rab5. This is SUN domain-containing protein 2 from Mus musculus (Mouse).